A 133-amino-acid chain; its full sequence is Lymphocyte antigen 6 complex locus protein G6d (133 aa).

An N-terminal signal peptide occupies residues 1–19 (MKPQFVGILLSSLLGAALG). The region spanning 22-116 (MRCYNCGGSP…ASHVAPAGIL (95 aa)) is the UPAR/Ly6 domain. Residues Cys-27 and Cys-35 are joined by a disulfide bond. Thr-40 and Thr-41 each carry an O-linked (GalNAc...) threonine glycan. 2 disulfide bridges follow: Cys-42-Cys-71 and Cys-77-Cys-96. The GPI-anchor amidated serine moiety is linked to residue Ser-104. A propeptide spans 105–133 (AVASHVAPAGILAAAATALTCLLPGLWSG) (removed in mature form).

As to quaternary structure, homodimer. O-glycosylated. As to expression, expressed in the adult lung, and in fetal liver, lung, kidney, brain and spleen.

The protein localises to the cell membrane. It localises to the cell projection. It is found in the filopodium. The protein is Lymphocyte antigen 6 complex locus protein G6d (LY6G6D) of Homo sapiens (Human).